A 153-amino-acid polypeptide reads, in one-letter code: Methylglyoxal synthase (153 aa).

In terms of domain architecture, MGS-like spans 6-153 (RTIAARKHIA…QRYLAERLPS (148 aa)). Residues His19, Lys23, 45–48 (TGTT), and 65–66 (SG) contribute to the substrate site. Asp71 serves as the catalytic Proton donor/acceptor. Residue His98 participates in substrate binding.

The protein belongs to the methylglyoxal synthase family.

It catalyses the reaction dihydroxyacetone phosphate = methylglyoxal + phosphate. Catalyzes the formation of methylglyoxal from dihydroxyacetone phosphate. This Sodalis glossinidius (strain morsitans) protein is Methylglyoxal synthase.